Consider the following 73-residue polypeptide: MNLETPSQENVNFMLTEITTKLKMVNVGVFENLELDSVDYNALIDIYQLIKRKSNFSPREMQLFAEELRRIRK.

Belongs to the UPF0435 family.

The protein is UPF0435 protein lwe1727 of Listeria welshimeri serovar 6b (strain ATCC 35897 / DSM 20650 / CCUG 15529 / CIP 8149 / NCTC 11857 / SLCC 5334 / V8).